Reading from the N-terminus, the 318-residue chain is NAC domain-containing protein 68 (318 aa).

One can recognise an NAC domain in the interval 21–175; sequence LPPGFRFHPT…EWVLCRLYNK (155 aa).

In terms of tissue distribution, expressed in stems, leaf blades and callus. Weakly expressed in developing flowers.

The protein localises to the nucleus. Its function is as follows. Probable transcription factor involved in stress response. The polypeptide is NAC domain-containing protein 68 (Oryza sativa subsp. japonica (Rice)).